Here is a 459-residue protein sequence, read N- to C-terminus: Siroheme synthase 2 (459 aa).

Positions 1–204 (MDYLPIFCQL…EDRERVQQLT (204 aa)) are precorrin-2 dehydrogenase /sirohydrochlorin ferrochelatase. NAD(+)-binding positions include 22–23 (EI) and 43–44 (LD). Serine 128 carries the phosphoserine modification. A uroporphyrinogen-III C-methyltransferase region spans residues 216–459 (GEVTLVGAGP…KLSWFSDQTA (244 aa)). Proline 225 contributes to the S-adenosyl-L-methionine binding site. The active-site Proton acceptor is the aspartate 248. The active-site Proton donor is the lysine 270. Residues 301–303 (GGD), isoleucine 306, 331–332 (TA), methionine 382, and glycine 411 each bind S-adenosyl-L-methionine.

This sequence in the N-terminal section; belongs to the precorrin-2 dehydrogenase / sirohydrochlorin ferrochelatase family. It in the C-terminal section; belongs to the precorrin methyltransferase family.

The enzyme catalyses uroporphyrinogen III + 2 S-adenosyl-L-methionine = precorrin-2 + 2 S-adenosyl-L-homocysteine + H(+). The catalysed reaction is precorrin-2 + NAD(+) = sirohydrochlorin + NADH + 2 H(+). It catalyses the reaction siroheme + 2 H(+) = sirohydrochlorin + Fe(2+). Its pathway is cofactor biosynthesis; adenosylcobalamin biosynthesis; precorrin-2 from uroporphyrinogen III: step 1/1. It participates in cofactor biosynthesis; adenosylcobalamin biosynthesis; sirohydrochlorin from precorrin-2: step 1/1. The protein operates within porphyrin-containing compound metabolism; siroheme biosynthesis; precorrin-2 from uroporphyrinogen III: step 1/1. It functions in the pathway porphyrin-containing compound metabolism; siroheme biosynthesis; siroheme from sirohydrochlorin: step 1/1. Its pathway is porphyrin-containing compound metabolism; siroheme biosynthesis; sirohydrochlorin from precorrin-2: step 1/1. Its function is as follows. Multifunctional enzyme that catalyzes the SAM-dependent methylations of uroporphyrinogen III at position C-2 and C-7 to form precorrin-2 via precorrin-1. Then it catalyzes the NAD-dependent ring dehydrogenation of precorrin-2 to yield sirohydrochlorin. Finally, it catalyzes the ferrochelation of sirohydrochlorin to yield siroheme. This chain is Siroheme synthase 2, found in Pectobacterium atrosepticum (strain SCRI 1043 / ATCC BAA-672) (Erwinia carotovora subsp. atroseptica).